A 167-amino-acid chain; its full sequence is Ribosome maturation factor RimM (167 aa).

Residues 94–166 (DDRAWLHELE…YIHVPRFDEF (73 aa)) form the PRC barrel domain.

This sequence belongs to the RimM family. As to quaternary structure, binds ribosomal protein uS19.

The protein localises to the cytoplasm. An accessory protein needed during the final step in the assembly of 30S ribosomal subunit, possibly for assembly of the head region. Essential for efficient processing of 16S rRNA. May be needed both before and after RbfA during the maturation of 16S rRNA. It has affinity for free ribosomal 30S subunits but not for 70S ribosomes. The sequence is that of Ribosome maturation factor RimM from Chlorobium luteolum (strain DSM 273 / BCRC 81028 / 2530) (Pelodictyon luteolum).